Here is an 876-residue protein sequence, read N- to C-terminus: GRB2-associated and regulator of MAPK protein (876 aa).

A CABIT region spans residues 12–320 (KDVKWSPVAM…HQVKGDMWPE (309 aa)). A Phosphotyrosine modification is found at Tyr105. Residues 427-448 (GDSGSDYLFPEANEESAGIPGK) are disordered. Position 453 is a phosphotyrosine (Tyr453). Disordered regions lie at residues 460–501 (EGKP…ATLG) and 530–572 (LNAP…SYYS). The necessary for interaction with GRB2 stretch occupies residues 498-550 (ATLGATIKSSEIALPPPPVPPKSEAVREECRLLNAPPVPPRSAKPLSTSPSIP). Residues 560–572 (QTRSPSPTLSYYS) show a composition bias toward polar residues. Phosphoserine is present on residues Ser609 and Ser613. 2 stretches are compositionally biased toward polar residues: residues 630-639 (SGASENQTRS) and 647-657 (RSYSYPRQKTP). 2 disordered regions span residues 630–664 (SGAS…KRTC) and 722–759 (CPAL…TAGS). The region spanning 811-876 (LSIEEVSKSL…QFINGWRPKI (66 aa)) is the SAM domain.

This sequence belongs to the GAREM family. As to quaternary structure, interacts with EGFR. Interacts (via proline-rich domain and phosphorylated at Tyr-105 and Tyr-453) with GRB2 (via SH3 domains); the interaction occurs upon EGF stimulation. Interacts (phosphorylated at Tyr-453) with PTPN11; the interaction increases MAPK/ERK activity and does not affect the GRB2/SOS complex formation. Post-translationally, on EGF stimulation, phosphorylated on Tyr-105 and Tyr-453.

Its function is as follows. Acts as an adapter protein that plays a role in intracellular signaling cascades triggered either by the cell surface activated epidermal growth factor receptor and/or cytoplasmic protein tyrosine kinases. Promotes activation of the MAPK/ERK signaling pathway. Plays a role in the regulation of cell proliferation. This is GRB2-associated and regulator of MAPK protein (Garem1) from Mus musculus (Mouse).